A 162-amino-acid chain; its full sequence is Ribonuclease P protein component (162 aa).

Residues 1-62 form a disordered region; sequence MDEKDLATQP…GPPKAGGRLL (62 aa). The segment covering 21-36 has biased composition (basic and acidic residues); the sequence is GPHEDPRRQERAEAQA.

The protein belongs to the RnpA family. Consists of a catalytic RNA component (M1 or rnpB) and a protein subunit.

It catalyses the reaction Endonucleolytic cleavage of RNA, removing 5'-extranucleotides from tRNA precursor.. Its function is as follows. RNaseP catalyzes the removal of the 5'-leader sequence from pre-tRNA to produce the mature 5'-terminus. It can also cleave other RNA substrates such as 4.5S RNA. The protein component plays an auxiliary but essential role in vivo by binding to the 5'-leader sequence and broadening the substrate specificity of the ribozyme. The protein is Ribonuclease P protein component of Thermus aquaticus.